The chain runs to 108 residues: Ig kappa chain V-V region HP 124E1 (108 aa).

Residues 1-23 form a framework-1 region; the sequence is DIQMTQTTSSLSASLGDRVTISC. The cysteines at positions 23 and 88 are disulfide-linked. A complementarity-determining-1 region spans residues 24 to 34; sequence RASQDINNYLN. The framework-2 stretch occupies residues 35–49; that stretch reads WYQQKPDGTVKLLIY. The complementarity-determining-2 stretch occupies residues 50-56; it reads YTSRLHS. A framework-3 region spans residues 57-88; that stretch reads GVPSRFSGSGSGTDYSLTISNLEQEDIATYFC. Positions 89–97 are complementarity-determining-3; it reads QQGKTLPRT. A framework-4 region spans residues 98-108; the sequence is FGGGTKLEIKR.

The polypeptide is Ig kappa chain V-V region HP 124E1 (Mus musculus (Mouse)).